The following is a 142-amino-acid chain: Large ribosomal subunit protein uL11 (142 aa).

The protein belongs to the universal ribosomal protein uL11 family. In terms of assembly, part of the ribosomal stalk of the 50S ribosomal subunit. Interacts with L10 and the large rRNA to form the base of the stalk. L10 forms an elongated spine to which L12 dimers bind in a sequential fashion forming a multimeric L10(L12)X complex. One or more lysine residues are methylated.

Its function is as follows. Forms part of the ribosomal stalk which helps the ribosome interact with GTP-bound translation factors. In Rhodospirillum rubrum (strain ATCC 11170 / ATH 1.1.1 / DSM 467 / LMG 4362 / NCIMB 8255 / S1), this protein is Large ribosomal subunit protein uL11.